The chain runs to 576 residues: 60 kDa heat shock protein homolog 2, mitochondrial (576 aa).

A mitochondrion-targeting transit peptide spans 1–61; that stretch reads MMRMFRYTNT…AVTMGPKGRN (61 aa).

Belongs to the chaperonin (HSP60) family. In terms of tissue distribution, first detectable expression is seen in the posterior part of the dorsal tracheal trunk at stage 14-15, which marks the beginning of terminal tracheation. In the larval gut, expression in proventriculus is stronger than in midgut and hindgut. Malpighian tubules shows low expression and late third instar larval imaginal disks and brain showed moderate expression. In larval ovary and testis, expression is strong in the posterior region.

It is found in the mitochondrion matrix. Functionally, prevents misfolding and promotes the refolding and proper assembly of unfolded polypeptides generated under stress conditions. Essential for proper development of trachea, spermatogonia and spermatocytes. In Drosophila melanogaster (Fruit fly), this protein is 60 kDa heat shock protein homolog 2, mitochondrial (Hsp60C).